The sequence spans 342 residues: Heat-inducible transcription repressor HrcA (342 aa).

It belongs to the HrcA family.

In terms of biological role, negative regulator of class I heat shock genes (grpE-dnaK-dnaJ and groELS operons). Prevents heat-shock induction of these operons. This Corynebacterium efficiens (strain DSM 44549 / YS-314 / AJ 12310 / JCM 11189 / NBRC 100395) protein is Heat-inducible transcription repressor HrcA.